Here is a 251-residue protein sequence, read N- to C-terminus: Transmembrane ascorbate-dependent reductase CYB561 (251 aa).

Met-1 carries the post-translational modification N-acetylmethionine. The Cytoplasmic segment spans residues 1–16 (MEGGAAASTPAALPYY). A helical membrane pass occupies residues 17–37 (VAFSQLLGLTLVAMTGAWLGL). Residues 19–220 (FSQLLGLTLV…FGGAVLYILT (202 aa)) enclose the Cytochrome b561 domain. Residues 38–51 (YRGGIAWESDLQFN) are Vesicular-facing. A helical transmembrane segment spans residues 52–72 (AHPLCMVIGLIFLQGDALLVY). Residues His-53, Arg-73, and Lys-80 each contribute to the heme b site. At 73–85 (RVFRNEAKRTTKV) the chain is on the cytoplasmic side. Lys-80 and Lys-84 together coordinate L-ascorbate. The helical transmembrane segment at 86–106 (LHGLLHIFALVIALVGLVAVF) threads the bilayer. Residues His-87, 116–119 (DLYS), and His-121 contribute to the heme b site. Over 107-124 (DYHRKEGYADLYSLHSWC) the chain is Vesicular. A helical membrane pass occupies residues 125 to 145 (GILVFVLYFVQWLVGFSFFLF). Residues 146-158 (PGASFSLRSRYRP) are Cytoplasmic-facing. Residue Arg-153 participates in L-ascorbate binding. A helical membrane pass occupies residues 159-179 (QHIFFGATIFLLSVGTALLGL). Heme b-binding residues include His-160 and Glu-181. Residues 180–198 (KEALLFKLRDKYSAFEPEG) lie on the Vesicular side of the membrane. Residues 199–219 (VLANVLGLLLACFGGAVLYIL) form a helical membrane-spanning segment. Topologically, residues 220–251 (TRADWKRPSQAEEQALSMDFKTLTEGDSPGSQ) are cytoplasmic. Position 225 (Lys-225) interacts with heme b. Ser-247 is subject to Phosphoserine.

It depends on heme b as a cofactor.

The protein resides in the cytoplasmic vesicle. Its subcellular location is the secretory vesicle. It is found in the chromaffin granule membrane. The catalysed reaction is monodehydro-L-ascorbate radical(out) + L-ascorbate(in) = monodehydro-L-ascorbate radical(in) + L-ascorbate(out). Its function is as follows. Transmembrane reductase that uses ascorbate as an electron donor in the cytoplasm and transfers electrons across membranes to reduce monodehydro-L-ascorbate radical in the lumen of secretory vesicles. It is therefore involved the regeneration and homeostasis within secretory vesicles of ascorbate which in turn provides reducing equivalents needed to support the activity of intravesicular enzymes. This Pongo abelii (Sumatran orangutan) protein is Transmembrane ascorbate-dependent reductase CYB561 (CYB561).